The following is a 166-amino-acid chain: Small ribosomal subunit protein uS5 (166 aa).

The 64-residue stretch at 11-74 (LQEKLVAVNR…EQARRNMVKV (64 aa)) folds into the S5 DRBM domain.

It belongs to the universal ribosomal protein uS5 family. As to quaternary structure, part of the 30S ribosomal subunit. Contacts proteins S4 and S8.

Its function is as follows. With S4 and S12 plays an important role in translational accuracy. Located at the back of the 30S subunit body where it stabilizes the conformation of the head with respect to the body. This is Small ribosomal subunit protein uS5 from Tolumonas auensis (strain DSM 9187 / NBRC 110442 / TA 4).